The sequence spans 147 residues: Large ribosomal subunit protein uL13 (147 aa).

Belongs to the universal ribosomal protein uL13 family. Part of the 50S ribosomal subunit.

Its function is as follows. This protein is one of the early assembly proteins of the 50S ribosomal subunit, although it is not seen to bind rRNA by itself. It is important during the early stages of 50S assembly. This is Large ribosomal subunit protein uL13 from Limosilactobacillus fermentum (strain NBRC 3956 / LMG 18251) (Lactobacillus fermentum).